Reading from the N-terminus, the 305-residue chain is MANKNNVTELIFTGLFQDPEVQKVCFVLFLPVYLATLLGNSLILVAVSISKTLHSPMYFFLSSLSLVEICYSSTIVPKFITDLLAKVKTISLKGCLTQIFFSHFFGVVEVILLVVMAYDRYVAICKPLHYMNIMSRQVCHMLVAGSWLGGFIHSIIQIIITIPLPFCGPNVIDHYFCDLQQLFKLACTDTFMEGFIVMANSGLISIVSLFILVSSYAVILISLRKRSAEGRRKALSTCASHITVVILFFVPGAFIYMRPSSTFTEDKLVSVFYTVITPMLNPIVYTLRNTEMKNAIRMSWKQKDS.

The Extracellular segment spans residues 1–25 (MANKNNVTELIFTGLFQDPEVQKVC). Asn-6 carries N-linked (GlcNAc...) asparagine glycosylation. Residues 26-46 (FVLFLPVYLATLLGNSLILVA) form a helical membrane-spanning segment. The Cytoplasmic segment spans residues 47 to 55 (VSISKTLHS). Residues 56-76 (PMYFFLSSLSLVEICYSSTIV) form a helical membrane-spanning segment. Over 77-95 (PKFITDLLAKVKTISLKGC) the chain is Extracellular. A disulfide bridge links Cys-95 with Cys-187. A helical membrane pass occupies residues 96–116 (LTQIFFSHFFGVVEVILLVVM). At 117-141 (AYDRYVAICKPLHYMNIMSRQVCHM) the chain is on the cytoplasmic side. Residues 142–162 (LVAGSWLGGFIHSIIQIIITI) traverse the membrane as a helical segment. The Extracellular segment spans residues 163–202 (PLPFCGPNVIDHYFCDLQQLFKLACTDTFMEGFIVMANSG). A helical transmembrane segment spans residues 203 to 223 (LISIVSLFILVSSYAVILISL). Residues 224-236 (RKRSAEGRRKALS) lie on the Cytoplasmic side of the membrane. The chain crosses the membrane as a helical span at residues 237–257 (TCASHITVVILFFVPGAFIYM). Residues 258 to 266 (RPSSTFTED) lie on the Extracellular side of the membrane. A helical membrane pass occupies residues 267-287 (KLVSVFYTVITPMLNPIVYTL). The Cytoplasmic portion of the chain corresponds to 288–305 (RNTEMKNAIRMSWKQKDS).

The protein belongs to the G-protein coupled receptor 1 family.

It localises to the cell membrane. Its function is as follows. Odorant receptor. The protein is Olfactory receptor 4B13 of Mus musculus (Mouse).